The primary structure comprises 98 residues: NADH-ubiquinone oxidoreductase chain 4L (98 aa).

Helical transmembrane passes span 1–21 (MSLT…GLLM), 29–49 (SLLC…VIIL), and 61–81 (IILL…LVMV).

It belongs to the complex I subunit 4L family. As to quaternary structure, core subunit of respiratory chain NADH dehydrogenase (Complex I) which is composed of 45 different subunits.

The protein localises to the mitochondrion inner membrane. The catalysed reaction is a ubiquinone + NADH + 5 H(+)(in) = a ubiquinol + NAD(+) + 4 H(+)(out). Functionally, core subunit of the mitochondrial membrane respiratory chain NADH dehydrogenase (Complex I) which catalyzes electron transfer from NADH through the respiratory chain, using ubiquinone as an electron acceptor. Part of the enzyme membrane arm which is embedded in the lipid bilayer and involved in proton translocation. This Uroderma bilobatum (Tent-making bat) protein is NADH-ubiquinone oxidoreductase chain 4L (MT-ND4L).